We begin with the raw amino-acid sequence, 222 residues long: Type II restriction enzyme AbrI (222 aa).

2 disordered regions span residues 21–45 and 161–222; these read GNRE…RRDR and NQRR…SPRI. A compositionally biased stretch (basic and acidic residues) spans 22–42; sequence NREKARQKQQESGKPDQGERR. Over residues 188 to 202 the composition is skewed to low complexity; that stretch reads SSASGSSRSSFTPRP.

Belongs to the XhoI type II restriction endonuclease family.

The enzyme catalyses Endonucleolytic cleavage of DNA to give specific double-stranded fragments with terminal 5'-phosphates.. Its function is as follows. A P subtype restriction enzyme that recognizes the double-stranded sequence 5'-CTCGAG-3' and cleaves after C-1. This is Type II restriction enzyme AbrI (abrIR) from Azospirillum brasilense.